The primary structure comprises 420 residues: Deoxyribodipyrimidine photo-lyase (420 aa).

The Photolyase/cryptochrome alpha/beta domain occupies 2-124; sequence GPLLVWHRGD…PLHLLPAPHL (123 aa). Residues 147–176 form a disordered region; it reads APPLPPPEALPKGPEEGEIPREDPGLPLPE. Residues 159–170 are compositionally biased toward basic and acidic residues; that stretch reads GPEEGEIPREDP. Position 197 (Tyr197) interacts with FAD. DNA is bound at residue Arg201. FAD is bound by residues 209-213, Trp241, Arg248, Asn310, and 341-343; these read GSRLS and DGD. Interaction with DNA stretches follow at residues 244–251 and 310–311; these read ELLWRDFS and NR. DNA is bound at residue Gln373.

Belongs to the DNA photolyase class-1 family. As to quaternary structure, monomer. FAD is required as a cofactor.

The catalysed reaction is cyclobutadipyrimidine (in DNA) = 2 pyrimidine residues (in DNA).. Involved in repair of UV radiation-induced DNA damage. Catalyzes the light-dependent monomerization (300-600 nm) of cyclobutyl pyrimidine dimers (in cis-syn configuration), which are formed between adjacent bases on the same DNA strand upon exposure to ultraviolet radiation. The protein is Deoxyribodipyrimidine photo-lyase (phr) of Thermus thermophilus (strain ATCC 27634 / DSM 579 / HB8).